Here is a 1042-residue protein sequence, read N- to C-terminus: Carbamoyl phosphate synthase large chain (1042 aa).

A carboxyphosphate synthetic domain region spans residues 1–417; that stretch reads MTEDSRTILL…SLLKALRSSE (417 aa). Residues Arg127, Arg182, Gly188, Gly189, Glu221, Ile223, Glu228, Gly254, Ile255, His256, Gln297, and Glu314 each coordinate ATP. The 213-residue stretch at 131–343 folds into the ATP-grasp 1 domain; that stretch reads RQRMADLGQP…IARVTAKVAL (213 aa). The Mg(2+) site is built by Gln297, Glu314, and Asn316. Mn(2+)-binding residues include Gln297, Glu314, and Asn316. Residues 418 to 558 are oligomerization domain; the sequence is YDPSVDWATV…SQGSTGSDVR (141 aa). A carbamoyl phosphate synthetic domain region spans residues 559–947; sequence ADRDAHSVVI…WKAQVAASNA (389 aa). In terms of domain architecture, ATP-grasp 2 spans 689 to 880; that stretch reads NRLLDERDIS…IAKLAAKVMA (192 aa). Residues Arg725, Glu764, Leu766, Glu771, Gly796, Val797, His798, Ser799, Gln839, and Glu851 each coordinate ATP. Mg(2+) is bound by residues Gln839, Glu851, and Asn853. Gln839, Glu851, and Asn853 together coordinate Mn(2+). Residues 947–1042 form the MGS-like domain; the sequence is APVPGSTAVV…DRPVNDETWG (96 aa). Residues 948–1042 are allosteric domain; sequence PVPGSTAVVD…DRPVNDETWG (95 aa).

The protein belongs to the CarB family. In terms of assembly, composed of two chains; the small (or glutamine) chain promotes the hydrolysis of glutamine to ammonia, which is used by the large (or ammonia) chain to synthesize carbamoyl phosphate. Tetramer of heterodimers (alpha,beta)4. It depends on Mg(2+) as a cofactor. Mn(2+) is required as a cofactor.

The catalysed reaction is hydrogencarbonate + L-glutamine + 2 ATP + H2O = carbamoyl phosphate + L-glutamate + 2 ADP + phosphate + 2 H(+). It carries out the reaction hydrogencarbonate + NH4(+) + 2 ATP = carbamoyl phosphate + 2 ADP + phosphate + 2 H(+). It participates in amino-acid biosynthesis; L-arginine biosynthesis; carbamoyl phosphate from bicarbonate: step 1/1. The protein operates within pyrimidine metabolism; UMP biosynthesis via de novo pathway; (S)-dihydroorotate from bicarbonate: step 1/3. Large subunit of the glutamine-dependent carbamoyl phosphate synthetase (CPSase). CPSase catalyzes the formation of carbamoyl phosphate from the ammonia moiety of glutamine, carbonate, and phosphate donated by ATP, constituting the first step of 2 biosynthetic pathways, one leading to arginine and/or urea and the other to pyrimidine nucleotides. The large subunit (synthetase) binds the substrates ammonia (free or transferred from glutamine from the small subunit), hydrogencarbonate and ATP and carries out an ATP-coupled ligase reaction, activating hydrogencarbonate by forming carboxy phosphate which reacts with ammonia to form carbamoyl phosphate. The chain is Carbamoyl phosphate synthase large chain from Halobacterium salinarum (strain ATCC 700922 / JCM 11081 / NRC-1) (Halobacterium halobium).